The primary structure comprises 78 residues: MIEETPALPAPVGAGVYNVYTGGPADSALPTAAQLGLEPPRFCAECGRRMIVQVRPDGWWAQCSRHGHVDSTDLDPRR.

The protein belongs to the BsaP family. It depends on iron-sulfur cluster as a cofactor.

Functionally, required for the activity of the biotin synthase BioB. The sequence is that of Biotin synthase auxiliary protein from Mycolicibacterium smegmatis (strain ATCC 700084 / mc(2)155) (Mycobacterium smegmatis).